A 476-amino-acid chain; its full sequence is Ribulose bisphosphate carboxylase large chain (476 aa).

Positions 1–2 (MS) are excised as a propeptide. Position 3 is an N-acetylproline (Pro-3). N6,N6,N6-trimethyllysine is present on Lys-14. Positions 123 and 173 each coordinate substrate. Lys-175 (proton acceptor) is an active-site residue. Lys-177 contributes to the substrate binding site. Mg(2+)-binding residues include Lys-201, Asp-203, and Glu-204. Lys-201 carries the post-translational modification N6-carboxylysine. Catalysis depends on His-294, which acts as the Proton acceptor. Substrate-binding residues include Arg-295, His-327, and Ser-379.

The protein belongs to the RuBisCO large chain family. Type I subfamily. In terms of assembly, heterohexadecamer of 8 large chains and 8 small chains; disulfide-linked. The disulfide link is formed within the large subunit homodimers. Mg(2+) is required as a cofactor. In terms of processing, the disulfide bond which can form in the large chain dimeric partners within the hexadecamer appears to be associated with oxidative stress and protein turnover.

The protein localises to the plastid. Its subcellular location is the chloroplast. It catalyses the reaction 2 (2R)-3-phosphoglycerate + 2 H(+) = D-ribulose 1,5-bisphosphate + CO2 + H2O. The catalysed reaction is D-ribulose 1,5-bisphosphate + O2 = 2-phosphoglycolate + (2R)-3-phosphoglycerate + 2 H(+). In terms of biological role, ruBisCO catalyzes two reactions: the carboxylation of D-ribulose 1,5-bisphosphate, the primary event in carbon dioxide fixation, as well as the oxidative fragmentation of the pentose substrate in the photorespiration process. Both reactions occur simultaneously and in competition at the same active site. This Setaria italica (Foxtail millet) protein is Ribulose bisphosphate carboxylase large chain.